A 751-amino-acid chain; its full sequence is Photosystem I P700 chlorophyll a apoprotein A1 (751 aa).

8 helical membrane-spanning segments follow: residues 73–96 (IFSAHFGQLGVILIWLSGMYFHGA), 159–182 (LYSTAIGGLLLAAAMFFAGWFHYH), 198–222 (MNHHLGGLLGLGSLGWAGHQIHVSL), 294–312 (TAHHHVAIAVLFLVAGHMY), 349–372 (WHAQLAINLALFGSLSIVVAHHMY), 388–414 (LSLFTHHMWIGGFCVVGAAAHAAIFMV), 436–458 (AIISHLNWVCIFLGFHSFGLYIH), and 533–551 (FLVHHIHAFTIHVTVLILL). [4Fe-4S] cluster contacts are provided by Cys-575 and Cys-584. 2 consecutive transmembrane segments (helical) span residues 591 to 612 (HVFLGLFWMYNSISVVIFHFSW) and 665 to 687 (LSAYGLIFLGAHFIWAFSLMFLF). His-676 serves as a coordination point for chlorophyll a'. The chlorophyll a site is built by Met-684 and Tyr-692. A phylloquinone-binding site is contributed by Trp-693. A helical membrane pass occupies residues 725-745 (AVGVAHYLLGGIATTWAFFLA).

Belongs to the PsaA/PsaB family. In terms of assembly, the PsaA/B heterodimer binds the P700 chlorophyll special pair and subsequent electron acceptors. PSI consists of a core antenna complex that captures photons, and an electron transfer chain that converts photonic excitation into a charge separation. The eukaryotic PSI reaction center is composed of at least 11 subunits. The cofactor is P700 is a chlorophyll a/chlorophyll a' dimer, A0 is one or more chlorophyll a, A1 is one or both phylloquinones and FX is a shared 4Fe-4S iron-sulfur center..

Its subcellular location is the plastid. It localises to the chloroplast thylakoid membrane. It catalyses the reaction reduced [plastocyanin] + hnu + oxidized [2Fe-2S]-[ferredoxin] = oxidized [plastocyanin] + reduced [2Fe-2S]-[ferredoxin]. PsaA and PsaB bind P700, the primary electron donor of photosystem I (PSI), as well as the electron acceptors A0, A1 and FX. PSI is a plastocyanin/cytochrome c6-ferredoxin oxidoreductase, converting photonic excitation into a charge separation, which transfers an electron from the donor P700 chlorophyll pair to the spectroscopically characterized acceptors A0, A1, FX, FA and FB in turn. Oxidized P700 is reduced on the lumenal side of the thylakoid membrane by plastocyanin or cytochrome c6. This is Photosystem I P700 chlorophyll a apoprotein A1 from Nephroselmis olivacea (Green alga).